Here is a 46-residue protein sequence, read N- to C-terminus: DNA-directed RNA polymerase subunit Rpo12 (46 aa).

Residues cysteine 8, cysteine 23, and cysteine 26 each coordinate Zn(2+).

The protein belongs to the archaeal Rpo12/eukaryotic RPC10 RNA polymerase subunit family. In terms of assembly, part of the RNA polymerase complex. Requires Zn(2+) as cofactor.

It localises to the cytoplasm. The catalysed reaction is RNA(n) + a ribonucleoside 5'-triphosphate = RNA(n+1) + diphosphate. DNA-dependent RNA polymerase (RNAP) catalyzes the transcription of DNA into RNA using the four ribonucleoside triphosphates as substrates. In Archaeoglobus fulgidus (strain ATCC 49558 / DSM 4304 / JCM 9628 / NBRC 100126 / VC-16), this protein is DNA-directed RNA polymerase subunit Rpo12.